The following is a 371-amino-acid chain: Queuine tRNA-ribosyltransferase (371 aa).

Aspartate 90 (proton acceptor) is an active-site residue. Substrate-binding positions include 90–94 (DSGGF), aspartate 144, glutamine 188, and glycine 215. An RNA binding region spans residues 246 to 252 (GVGTPED). Aspartate 265 functions as the Nucleophile in the catalytic mechanism. The interval 270–274 (TRNAR) is RNA binding; important for wobble base 34 recognition. The Zn(2+) site is built by cysteine 303, cysteine 305, cysteine 308, and histidine 334.

This sequence belongs to the queuine tRNA-ribosyltransferase family. In terms of assembly, homodimer. Within each dimer, one monomer is responsible for RNA recognition and catalysis, while the other monomer binds to the replacement base PreQ1. It depends on Zn(2+) as a cofactor.

The catalysed reaction is 7-aminomethyl-7-carbaguanine + guanosine(34) in tRNA = 7-aminomethyl-7-carbaguanosine(34) in tRNA + guanine. It functions in the pathway tRNA modification; tRNA-queuosine biosynthesis. Its function is as follows. Catalyzes the base-exchange of a guanine (G) residue with the queuine precursor 7-aminomethyl-7-deazaguanine (PreQ1) at position 34 (anticodon wobble position) in tRNAs with GU(N) anticodons (tRNA-Asp, -Asn, -His and -Tyr). Catalysis occurs through a double-displacement mechanism. The nucleophile active site attacks the C1' of nucleotide 34 to detach the guanine base from the RNA, forming a covalent enzyme-RNA intermediate. The proton acceptor active site deprotonates the incoming PreQ1, allowing a nucleophilic attack on the C1' of the ribose to form the product. After dissociation, two additional enzymatic reactions on the tRNA convert PreQ1 to queuine (Q), resulting in the hypermodified nucleoside queuosine (7-(((4,5-cis-dihydroxy-2-cyclopenten-1-yl)amino)methyl)-7-deazaguanosine). The polypeptide is Queuine tRNA-ribosyltransferase (Neisseria meningitidis serogroup A / serotype 4A (strain DSM 15465 / Z2491)).